The sequence spans 1033 residues: uncharacterized protein (1033 aa).

This is an uncharacterized protein from Mycoplasma pneumoniae (strain ATCC 29342 / M129 / Subtype 1) (Mycoplasmoides pneumoniae).